A 437-amino-acid chain; its full sequence is Histidine--tRNA ligase (437 aa).

Belongs to the class-II aminoacyl-tRNA synthetase family. In terms of assembly, homodimer.

It is found in the cytoplasm. The enzyme catalyses tRNA(His) + L-histidine + ATP = L-histidyl-tRNA(His) + AMP + diphosphate + H(+). The polypeptide is Histidine--tRNA ligase (Opitutus terrae (strain DSM 11246 / JCM 15787 / PB90-1)).